The sequence spans 396 residues: UPF0164 protein TP_0858 (396 aa).

Positions 1-28 are cleaved as a signal peptide; sequence MGTMIRHTFTHRCGALLCALALGSSTMA.

It belongs to the UPF0164 family.

The polypeptide is UPF0164 protein TP_0858 (Treponema pallidum (strain Nichols)).